We begin with the raw amino-acid sequence, 110 residues long: UPF0060 membrane protein Pmen_1247 (110 aa).

4 helical membrane-spanning segments follow: residues 5-25 (LWFL…WMWL), 31-51 (AWWI…LTRV), 59-79 (AYAA…ALIE), and 84-104 (MLSD…ILFA).

It belongs to the UPF0060 family.

Its subcellular location is the cell inner membrane. The polypeptide is UPF0060 membrane protein Pmen_1247 (Ectopseudomonas mendocina (strain ymp) (Pseudomonas mendocina)).